Here is a 347-residue protein sequence, read N- to C-terminus: Phenylalanine--tRNA ligase alpha subunit (347 aa).

Residues 83–111 (QNLSGGDDSGADPTFDPTLPGTRPSLGHI) form a disordered region. Glu274 provides a ligand contact to Mg(2+).

It belongs to the class-II aminoacyl-tRNA synthetase family. Phe-tRNA synthetase alpha subunit type 1 subfamily. In terms of assembly, tetramer of two alpha and two beta subunits. Mg(2+) serves as cofactor.

The protein resides in the cytoplasm. It catalyses the reaction tRNA(Phe) + L-phenylalanine + ATP = L-phenylalanyl-tRNA(Phe) + AMP + diphosphate + H(+). This chain is Phenylalanine--tRNA ligase alpha subunit, found in Rhodopirellula baltica (strain DSM 10527 / NCIMB 13988 / SH1).